The sequence spans 337 residues: Cytidine deaminase 2 (337 aa).

CMP/dCMP-type deaminase domains follow at residues 43 to 164 (TDPI…FSSL) and 199 to 320 (LDCS…LKYL). 84 to 86 (NVD) serves as a coordination point for substrate. Residue His-97 coordinates Zn(2+). Catalysis depends on Glu-99, which acts as the Proton donor. Cys-132 and Cys-135 together coordinate Zn(2+).

Belongs to the cytidine and deoxycytidylate deaminase family. Homodimer. Zn(2+) is required as a cofactor.

It carries out the reaction cytidine + H2O + H(+) = uridine + NH4(+). The enzyme catalyses 2'-deoxycytidine + H2O + H(+) = 2'-deoxyuridine + NH4(+). Functionally, this enzyme scavenges exogenous and endogenous cytidine and 2'-deoxycytidine for UMP synthesis. The polypeptide is Cytidine deaminase 2 (CDA2) (Arabidopsis thaliana (Mouse-ear cress)).